Here is a 218-residue protein sequence, read N- to C-terminus: uncharacterized protein (218 aa).

The N-terminal 28 residues, 1–28 (MLSLQCLPPFFISVPNRSTNSCSTAPLR), are a transit peptide targeting the chloroplast.

Belongs to the SixA phosphatase family.

Its subcellular location is the plastid. It is found in the chloroplast. This is an uncharacterized protein from Arabidopsis thaliana (Mouse-ear cress).